The primary structure comprises 1379 residues: DNA-directed RNA polymerase subunit beta'' (1379 aa).

Zn(2+) contacts are provided by cysteine 224, cysteine 295, cysteine 302, and cysteine 305. The tract at residues 503 to 524 is disordered; sequence SVQSLSVKRRSTSKLSETNDEA.

The protein belongs to the RNA polymerase beta' chain family. RpoC2 subfamily. In plastids the minimal PEP RNA polymerase catalytic core is composed of four subunits: alpha, beta, beta', and beta''. When a (nuclear-encoded) sigma factor is associated with the core the holoenzyme is formed, which can initiate transcription. Zn(2+) serves as cofactor.

Its subcellular location is the plastid. It catalyses the reaction RNA(n) + a ribonucleoside 5'-triphosphate = RNA(n+1) + diphosphate. Its function is as follows. DNA-dependent RNA polymerase catalyzes the transcription of DNA into RNA using the four ribonucleoside triphosphates as substrates. In Cuscuta exaltata (Tall dodder), this protein is DNA-directed RNA polymerase subunit beta''.